A 99-amino-acid polypeptide reads, in one-letter code: Ubiquitin-related modifier 1 (99 aa).

At Gly99 the chain carries 1-thioglycine. Gly99 participates in a covalent cross-link: Glycyl lysine isopeptide (Gly-Lys) (interchain with K-? in acceptor proteins).

This sequence belongs to the URM1 family. Homodimer; homodimerization may provide an autoprotection to the highly active C-terminal residue before attacking its substrates. Interacts with NCS2 and NCS6. Forms a conjugate with the target protein AHP1. In terms of processing, C-terminal thiocarboxylation occurs in 2 steps, it is first acyl-adenylated (-COAMP) via the hesA/moeB/thiF part of UBA4, then thiocarboxylated (-COSH) via the rhodanese domain of UBA4.

The protein localises to the cytoplasm. It is found in the nucleus. It participates in tRNA modification; 5-methoxycarbonylmethyl-2-thiouridine-tRNA biosynthesis. Acts as a sulfur carrier required for 2-thiolation of mcm(5)S(2)U at tRNA wobble positions of cytosolic tRNA(Lys), tRNA(Glu) and tRNA(Gln). Serves as sulfur donor in tRNA 2-thiolation reaction by being thiocarboxylated (-COSH) at its C-terminus by the MOCS3 homolog UBA4. The sulfur is then transferred to tRNA to form 2-thiolation of mcm(5)S(2)U. Prior mcm(5) tRNA modification by the elongator complex is required for 2-thiolation. Also acts as a ubiquitin-like protein (UBL) that is covalently conjugated via an isopeptide bond to lysine residues of target proteins such as AHP1. The thiocarboxylated form serves as substrate for conjugation and oxidative stress specifically induces the formation of UBL-protein conjugates. This chain is Ubiquitin-related modifier 1, found in Saccharomyces cerevisiae (strain RM11-1a) (Baker's yeast).